A 567-amino-acid chain; its full sequence is Urease subunit alpha (567 aa).

3 residues coordinate Ni(2+): His-134, His-136, and Lys-217. Lys-217 carries the post-translational modification N6-carboxylysine. Residue His-219 coordinates substrate. His-246 and His-272 together coordinate Ni(2+). His-320 (proton donor) is an active-site residue. Asp-360 provides a ligand contact to Ni(2+).

It belongs to the metallo-dependent hydrolases superfamily. Urease alpha subunit family. Heterotrimer of UreA (gamma), UreB (beta) and UreC (alpha) subunits. Three heterotrimers associate to form the active enzyme. Ni cation is required as a cofactor. Post-translationally, carboxylation allows a single lysine to coordinate two nickel ions.

The protein localises to the cytoplasm. It carries out the reaction urea + 2 H2O + H(+) = hydrogencarbonate + 2 NH4(+). Its pathway is nitrogen metabolism; urea degradation; CO(2) and NH(3) from urea (urease route): step 1/1. This Pseudomonas putida (strain GB-1) protein is Urease subunit alpha.